Consider the following 398-residue polypeptide: Secreted aspartic protease 3 (398 aa).

An N-terminal signal peptide occupies residues 1-18; the sequence is MFLKNIFIALAIALLADA. A propeptide spans 19-58 (activation peptide); sequence TPTTFNNSPGFVALNFDVIKTHKNVTGPQGEINTNVNVKR. Asparagine 42 is a glycosylation site (N-linked (GlcNAc...) asparagine). The Peptidase A1 domain occupies 72–384; it reads YASDITVGSN…DLDDNEISLA (313 aa). Residue aspartate 90 is part of the active site. 90–92 is a pepstatin A binding site; the sequence is DTG. The span at 103-112 shows a compositional bias: polar residues; that stretch reads VSCQAGQGQD. The interval 103–139 is disordered; the sequence is VSCQAGQGQDPNFCKNEGTYSPSSSSSSQNLNSPFSI. Cysteine 105 and cysteine 116 are joined by a disulfide. Positions 123-138 are enriched in low complexity; that stretch reads SPSSSSSSQNLNSPFS. 140–143 lines the pepstatin A pocket; the sequence is EYGD. The Zn(2+) site is built by histidine 188, aspartate 248, histidine 254, and aspartate 270. Aspartate 274 is a catalytic residue. Residue 274 to 278 participates in pepstatin A binding; it reads DSGTT. A disulfide bond links cysteine 312 and cysteine 350. The N-linked (GlcNAc...) asparagine glycan is linked to asparagine 313.

Belongs to the peptidase A1 family. Monomer.

The protein resides in the secreted. The enzyme catalyses Preferential cleavage at the carboxyl of hydrophobic amino acids, but fails to cleave 15-Leu-|-Tyr-16, 16-Tyr-|-Leu-17 and 24-Phe-|-Phe-25 of insulin B chain. Activates trypsinogen, and degrades keratin.. Its activity is regulated as follows. Inhibited by pepstatin A analogs. Its function is as follows. Secreted aspartic peptidases (SAPs) are a group of ten acidic hydrolases considered as key virulence factors. These enzymes supply the fungus with nutrient amino acids as well as are able to degrade the selected host's proteins involved in the immune defense. Induces host inflammatory cytokine production in a proteolytic activity-independent way. Moreover, acts toward human hemoglobin though limited proteolysis to generate a variety of antimicrobial hemocidins, enabling to compete with the other microorganisms of the same physiological niche using the microbicidal peptides generated from the host protein. Functionally, plays a key role in defense against host by cleaving histatin-5 (Hst 5), a peptide from human saliva that carries out fungicidal activity. The cleavage rate decreases in an order of SAP2 &gt; SAP9 &gt; SAP3 &gt; SAP7 &gt; SAP4 &gt; SAP1 &gt; SAP8. The first cleavage occurs between residues 'Lys-17' and 'His-18' of Hst 5, giving DSHAKRHHGYKRKFHEK and HHSHRGY peptides. Simultaneously, the DSHAKRHHGYKRK peptide is also formed. Further fragmentation by SAP3 results in DSHAKRHHGY and KRKFHEK products. This is Secreted aspartic protease 3 from Candida albicans (strain SC5314 / ATCC MYA-2876) (Yeast).